The following is a 229-amino-acid chain: Cytidylate kinase (229 aa).

12–20 (GPSGSGKGT) provides a ligand contact to ATP.

The protein belongs to the cytidylate kinase family. Type 1 subfamily.

It localises to the cytoplasm. It catalyses the reaction CMP + ATP = CDP + ADP. It carries out the reaction dCMP + ATP = dCDP + ADP. The protein is Cytidylate kinase of Pseudomonas fluorescens (strain ATCC BAA-477 / NRRL B-23932 / Pf-5).